A 319-amino-acid chain; its full sequence is Beta-xylosidase (319 aa).

Asp-14 acts as the Proton acceptor in catalysis. The Proton donor role is filled by Glu-222.

The protein belongs to the glycosyl hydrolase 43 family.

The enzyme catalyses Hydrolysis of (1-&gt;4)-beta-D-xylans, to remove successive D-xylose residues from the non-reducing termini.. Functionally, exoxylanase capable of acting on certain xylans and xylooligosaccharides. The sequence is that of Beta-xylosidase (xynB) from Xylanibacter ruminicola (Prevotella ruminicola).